Here is a 524-residue protein sequence, read N- to C-terminus: Bifunctional purine biosynthesis protein PurH (524 aa).

The MGS-like domain occupies 1–154 (MTRLALLSTS…KNHAHVTVLC (154 aa)).

The protein belongs to the PurH family.

It carries out the reaction (6R)-10-formyltetrahydrofolate + 5-amino-1-(5-phospho-beta-D-ribosyl)imidazole-4-carboxamide = 5-formamido-1-(5-phospho-D-ribosyl)imidazole-4-carboxamide + (6S)-5,6,7,8-tetrahydrofolate. The catalysed reaction is IMP + H2O = 5-formamido-1-(5-phospho-D-ribosyl)imidazole-4-carboxamide. It functions in the pathway purine metabolism; IMP biosynthesis via de novo pathway; 5-formamido-1-(5-phospho-D-ribosyl)imidazole-4-carboxamide from 5-amino-1-(5-phospho-D-ribosyl)imidazole-4-carboxamide (10-formyl THF route): step 1/1. It participates in purine metabolism; IMP biosynthesis via de novo pathway; IMP from 5-formamido-1-(5-phospho-D-ribosyl)imidazole-4-carboxamide: step 1/1. The sequence is that of Bifunctional purine biosynthesis protein PurH from Acaryochloris marina (strain MBIC 11017).